A 407-amino-acid polypeptide reads, in one-letter code: Imidazolonepropionase (407 aa).

Fe(3+) contacts are provided by histidine 74 and histidine 76. Residues histidine 74 and histidine 76 each coordinate Zn(2+). The 4-imidazolone-5-propanoate site is built by arginine 83, tyrosine 146, and histidine 179. Residue tyrosine 146 coordinates N-formimidoyl-L-glutamate. Histidine 244 is a binding site for Fe(3+). Residue histidine 244 participates in Zn(2+) binding. Glutamine 247 is a binding site for 4-imidazolone-5-propanoate. Aspartate 319 is a binding site for Fe(3+). Aspartate 319 contributes to the Zn(2+) binding site. Positions 321 and 323 each coordinate N-formimidoyl-L-glutamate. 4-imidazolone-5-propanoate is bound at residue threonine 324.

Belongs to the metallo-dependent hydrolases superfamily. HutI family. Zn(2+) is required as a cofactor. Fe(3+) serves as cofactor.

The protein resides in the cytoplasm. It catalyses the reaction 4-imidazolone-5-propanoate + H2O = N-formimidoyl-L-glutamate. Its pathway is amino-acid degradation; L-histidine degradation into L-glutamate; N-formimidoyl-L-glutamate from L-histidine: step 3/3. Catalyzes the hydrolytic cleavage of the carbon-nitrogen bond in imidazolone-5-propanoate to yield N-formimidoyl-L-glutamate. It is the third step in the universal histidine degradation pathway. In Salmonella arizonae (strain ATCC BAA-731 / CDC346-86 / RSK2980), this protein is Imidazolonepropionase.